The primary structure comprises 729 residues: DNA topoisomerase 3 (729 aa).

One can recognise a Toprim domain in the interval 3–136 (KSVVIAEKPS…IKRLWISSVT (134 aa)). Mg(2+) is bound by residues Glu-9 and Asp-105. The 442-residue stretch at 153-594 (YDNLYASAVA…EMKNYTKEIV (442 aa)) folds into the Topo IA-type catalytic domain. The interval 187–192 (NCGRVQ) is interaction with DNA. Tyr-310 functions as the O-(5'-phospho-DNA)-tyrosine intermediate in the catalytic mechanism. Residues 686–713 (ERRKKESGNKADKRDVQKYMKQQKKEEE) are compositionally biased toward basic and acidic residues. The tract at residues 686–718 (ERRKKESGNKADKRDVQKYMKQQKKEEEPLNNP) is disordered.

It belongs to the type IA topoisomerase family. Mg(2+) is required as a cofactor.

It carries out the reaction ATP-independent breakage of single-stranded DNA, followed by passage and rejoining.. Releases the supercoiling and torsional tension of DNA, which is introduced during the DNA replication and transcription, by transiently cleaving and rejoining one strand of the DNA duplex. Introduces a single-strand break via transesterification at a target site in duplex DNA. The scissile phosphodiester is attacked by the catalytic tyrosine of the enzyme, resulting in the formation of a DNA-(5'-phosphotyrosyl)-enzyme intermediate and the expulsion of a 3'-OH DNA strand. The free DNA strand then undergoes passage around the unbroken strand, thus removing DNA supercoils. Finally, in the religation step, the DNA 3'-OH attacks the covalent intermediate to expel the active-site tyrosine and restore the DNA phosphodiester backbone. The sequence is that of DNA topoisomerase 3 from Bacillus thuringiensis subsp. konkukian (strain 97-27).